The sequence spans 3010 residues: MSTNPKPQRKTKRNTNRRPQDVKFPGGGQIVGGVYLLPRRGPRLGVRATRKASERSQPRGRRQPIPKARRPEGRAWAQPGYPWPLYGNEGLGWAGWLLSPRGSRPSWGPTDPRRRSRNLGKVIDTLTCGFADLMGYIPLVGAPLGGAARALAHGVRVLEDGVNYATGNLPGCSFSIFLLALLSCLTIPASAYEVRNVSGIYHVTNDCSNSSIVYEAADVIMHTPGCVPCVREGNSSRCWVALTPTLAARNASVPTTTIRRHVDLLVGTAAFCSAMYVGDLCGSIFLVSQLFTFSPRRHETVQDCNCSIYPGHVSGHRMAWDMMMNWSPTTALVVSQLLRIPQAVVDMVAGAHWGVLAGLAYYSMVGNWAKVLIVALLFAGVDGETHTTGRVAGHTTSGFTSLFSSGASQKIQLVNTNGSWHINRTALNCNDSLQTGFFAALFYAHKFNSSGCPERMASCRPIDWFAQGWGPITYTKPNSSDQRPYCWHYAPRPCGVVPASQVCGPVYCFTPSPVVVGTTDRSGVPTYSWGENETDVMLLNNTRPPQGNWFGCTWMNSTGFTKTCGGPPCNIGGVGNRTLICPTDCFRKHPEATYTKCGSGPWLTPRCLVDYPYRLWHYPCTLNFSIFKVRMYVGGVEHRLNAACNWTRGERCNLEDRDRSELSPLLLSTTEWQILPCAFTTLPALSTGLIHLHQNIVDVQYLYGVGSAFVSFAIKWEYILLLFLLLADARVCACLWMMLLIAQAEAALENLVVLNAASVAGAHGILSFLVFFCAAWYIKGRLAPGAAYAFYGVWPLLLLLLALPPRAYALDREMAASCGGAVLVGLVFLTLSPYYKVFLTRLIWWLQYFITRAEAHMQVWVPPLNVRGGRDAIILLTCAVHPELIFDITKLLLAILGPLMVLQAGITRVPYFVRAQGLIRACMLVRKVAGGHYVQMAFMKLGALTGTYVYNHLTPLRDWAHAGLRDLAVAVEPVVFSAMETKVITWGADTAACGDIILGLPVSARRGKEIFLGPADSLEGQGWRLLAPITAYSQQTRGVLGCIITSLTGRDKNQVEGEVQVVSTATQSFLATCINGVCWTVYHGAGSKTLAGPKGPITQMYTNVDLDLVGWQAPPGARSMTPCSCGSSDLYLVTRHADVIPVRRRGDSRGSLLSPRPVSYLKGSSGGPLLCPSGHVVGVFRAAVCTRGVAKAVDFIPVESMETTMRSPVFTDNSSPPAVPQTFQVAHLHAPTGSGKSTKVPAAYAAQGYKVLVLNPSVAATLGFGAYMSKAHGIDPNIRTGVRTITTGGSITYSTYGKFLADGGCSGGAYDIIICDECHSTDSTTILGIGTVLDQAETAGARLVVLATATPPGSVTVPHPNIEEIGLSNNGEIPFYGKAIPIEAIKGGRHLIFCHSKKKCDELAAKLTGLGLNAVAYYRGLDVSVIPPIGDVVVVATDALMTGFTGDFDSVIDCNTCVTQTVDFSLDPTFTIETTTVPQDAVSRSQRRGRTGRGRSGIYRFVTPGERPSGMFDSSVLCECYDAGCAWYELTPAETSVRLRAYLNTPGLPVCQDHLEFWESVFTGLTHIDAHFLSQTKQAGDNFPYLVAYQATVCARAQAPPPSWDQMWKCLIRLKPTLHGPTPLLYRLGAVQNEVILTHPITKYIMACMSADLEVVTSTWVLVGGVLAALAAYCLTTGSVVIVGRIILSGKPAVVPDREVLYQEFDEMEECASQLPYIEQGMQLAEQFKQKALGLLQTATKQAEAAAPVVESKWRALETFWAKHMWNFISGIQYLAGLSTLPGNPAIASLMAFTASITSPLTTQNTLLFNILGGWVAAQLAPPSAASAFVGAGIAGAAVGSIGLGKVLVDILAGYGAGVAGALVAFKVMSGEVPSTEDLVNLLPAILSPGALVVGVVCAAILRRHVGPGEGAVQWMNRLIAFASRGNHVSPTHYVPESDAAARVTQILSSLTITQLLKRLHQWINEDCSTPCSGSWLRDVWDWICTVLTDFKTWLQSKLLPRLPGVPFLSCQRGYKGVWRGDGIMQTTCPCGAQIAGHVKNGSMRIVGPRTCSNTWHGTFPINAYTTGPCTPSPAPNYSRALWRVAAEEYVEVTRVGDFHYVTGMTTDNVKCPCQVPAPEFFTEVDGVRLHRYAPACKPLLREDVTFQVGLNQYLVGSQLPCEPEPDVTVLTSMLTDPSHITAETAKRRLARGSPPSLASSSASQLSAPSLKATCTTHHDSPDADLIEANLLWRQEMGGNITRVESENKVVILDSFEPLHAEGDEREISVAAEILRKSRKFPSALPIWARPDYNPPLLESWKDPDYVPPVVHGCPLPPTKAPPIPPPRRKRTVVLTESNVSSALAELATKTFGSSGSSAVDSGTATALPDLASDDGDKGSDVESYSSMPPLEGEPGDPDLSDGSWSTVSEEASEDVVCCSMSYTWTGALITPCAAEESKLPINPLSNSLLRHHNMVYATTSRSASLRQKKVTFDRLQVLDDHYRDVLKEMKAKASTVKAKLLSIEEACKLTPPHSAKSKFGYGAKDVRNLSSRAVNHIRSVWEDLLEDTETPIDTTIMAKSEVFCVQPEKGGRKPARLIVFPDLGVRVCEKMALYDVVSTLPQAVMGSSYGFQYSPKQRVEFLVNTWKSKKCPMGFSYDTRCFDSTVTESDIRVEESIYQCCDLAPEARQAIRSLTERLYIGGPLTNSKGQNCGYRRCRASGVLTTSCGNTLTCYLKATAACRAAKLQDCTMLVNGDDLVVICESAGTQEDAAALRAFTEAMTRYSAPPGDPPQPEYDLELITSCSSNVSVAHDASGKRVYYLTRDPTTPLARAAWETARHTPINSWLGNIIMYAPTLWARMILMTHFFSILLAQEQLEKALDCQIYGACYSIEPLDLPQIIERLHGLSAFTLHSYSPGEINRVASCLRKLGVPPLRTWRHRARSVRAKLLSQGGRAATCGRYLFNWAVRTKLKLTPIPAASQLDLSGWFVAGYSGGDIYHSLSRARPRWFPLCLLLLSVGVGIYLLPNR.

The residue at position 2 (Ser-2) is an N-acetylserine; by host. Residues 2–23 (STNPKPQRKTKRNTNRRPQDVK) are interaction with STAT1. The interval 2–58 (STNPKPQRKTKRNTNRRPQDVKFPGGGQIVGGVYLLPRRGPRLGVRATRKASERSQP) is interaction with EIF2AK2/PKR. Residues 2–59 (STNPKPQRKTKRNTNRRPQDVKFPGGGQIVGGVYLLPRRGPRLGVRATRKASERSQPR) form an interaction with DDX3X region. The tract at residues 2 to 75 (STNPKPQRKT…PKARRPEGRA (74 aa)) is disordered. The Cytoplasmic portion of the chain corresponds to 2–168 (STNPKPQRKT…EDGVNYATGN (167 aa)). 2 consecutive short sequence motifs (nuclear localization signal) follow at residues 5–13 (PKPQRKTKR) and 38–43 (PRRGPR). Basic residues predominate over residues 7-16 (PQRKTKRNTN). The span at 32-47 (GGVYLLPRRGPRLGVR) shows a compositional bias: low complexity. Position 53 is a phosphoserine; by host (Ser-53). Short sequence motifs (nuclear localization signal) lie at residues 58-64 (PRGRRQP) and 66-71 (PKARRP). A compositionally biased stretch (basic residues) spans 58-68 (PRGRRQPIPKA). Ser-99 is modified (phosphoserine; by host). The interval 112 to 152 (PRRRSRNLGKVIDTLTCGFADLMGYIPLVGAPLGGAARALA) is important for endoplasmic reticulum and mitochondrial localization. The residue at position 116 (Ser-116) is a Phosphoserine; by host PKA. Residues 122–173 (VIDTLTCGFADLMGYIPLVGAPLGGAARALAHGVRVLEDGVNYATGNLPGCS) are interaction with APOA2. The tract at residues 164 to 167 (YATG) is important for lipid droplets localization. The helical transmembrane segment at 169–189 (LPGCSFSIFLLALLSCLTIPA) threads the bilayer. A propeptide spans 178–191 (LLALLSCLTIPASA) (ER anchor for the core protein, removed in mature form by host signal peptidase). The Lumenal portion of the chain corresponds to 190 to 358 (SAYEVRNVSG…AGAHWGVLAG (169 aa)). Residues Asn-196, Asn-209, Asn-234, and Asn-250 are each glycosylated (N-linked (GlcNAc...) asparagine; by host). The tract at residues 265-296 (LVGTAAFCSAMYVGDLCGSIFLVSQLFTFSPR) is important for fusion. The N-linked (GlcNAc...) asparagine; by host glycan is linked to Asn-305. The helical transmembrane segment at 359-379 (LAYYSMVGNWAKVLIVALLFA) threads the bilayer. The Lumenal portion of the chain corresponds to 380 to 725 (GVDGETHTTG…WEYILLLFLL (346 aa)). The segment at 385-411 (THTTGRVAGHTTSGFTSLFSSGASQKI) is HVR1. Asn-417, Asn-423, Asn-430, and Asn-448 each carry an N-linked (GlcNAc...) (high mannose) asparagine; by host glycan. Intrachain disulfides connect Cys-429/Cys-552, Cys-452/Cys-459, Cys-486/Cys-494, and Cys-503/Cys-508. The interval 474 to 479 (YTKPNS) is HVR2. N-linked (GlcNAc...) asparagine; by host glycosylation occurs at Asn-478. Residues 480–493 (SDQRPYCWHYAPRP) are CD81-binding 1. Residue Asn-532 is glycosylated (N-linked (GlcNAc...) (high mannose) asparagine; by host). Residue Asn-540 is glycosylated (N-linked (GlcNAc...) asparagine; by host). Residues 544–551 (PPQGNWFG) form a CD81-binding 2 region. A glycan (N-linked (GlcNAc...) (high mannose) asparagine; by host) is linked at Asn-556. Residues Cys-564 and Cys-569 are joined by a disulfide bond. An N-linked (GlcNAc...) (high mannose) asparagine; by host glycan is attached at Asn-576. 3 cysteine pairs are disulfide-bonded: Cys-581–Cys-585, Cys-597–Cys-620, and Cys-607–Cys-644. N-linked (GlcNAc...) (high mannose) asparagine; by host glycans are attached at residues Asn-623 and Asn-645. A disulfide bond links Cys-652 and Cys-677. The interval 660–671 (SELSPLLLSTTE) is PKR/eIF2-alpha phosphorylation homology domain (PePHD). Residues 726–746 (LADARVCACLWMMLLIAQAEA) form a helical membrane-spanning segment. Residues 747–757 (ALENLVVLNAA) lie on the Lumenal side of the membrane. A helical transmembrane segment spans residues 758–778 (SVAGAHGILSFLVFFCAAWYI). Residues 779 to 781 (KGR) lie on the Cytoplasmic side of the membrane. A helical transmembrane segment spans residues 782 to 803 (LAPGAAYAFYGVWPLLLLLLAL). Topologically, residues 804-813 (PPRAYALDRE) are lumenal. A helical membrane pass occupies residues 814–834 (MAASCGGAVLVGLVFLTLSPY). The Cytoplasmic segment spans residues 835–838 (YKVF). A helical membrane pass occupies residues 839 to 859 (LTRLIWWLQYFITRAEAHMQV). Residues 860–881 (WVPPLNVRGGRDAIILLTCAVH) are Lumenal-facing. A helical membrane pass occupies residues 882 to 902 (PELIFDITKLLLAILGPLMVL). The 124-residue stretch at 903–1026 (QAGITRVPYF…SLEGQGWRLL (124 aa)) folds into the Peptidase C18 domain. Over 903–1657 (QAGITRVPYF…CMSADLEVVT (755 aa)) the chain is Cytoplasmic. Positions 904–1206 (AGITRVPYFV…PVESMETTMR (303 aa)) are protease NS2-3. Residue Cys-922 is the site of S-palmitoyl cysteine; by host attachment. The tract at residues 929–949 (AGGHYVQMAFMKLGALTGTYV) is interaction with host SCPS1. Active-site for protease NS2 activity; shared with dimeric partner residues include His-952, Glu-972, and Cys-993. The Peptidase S29 domain maps to 1027-1208 (APITAYSQQT…ESMETTMRSP (182 aa)). Active-site charge relay system; for serine protease NS3 activity residues include His-1083 and Asp-1107. Zn(2+)-binding residues include Cys-1123 and Cys-1125. The active-site Charge relay system; for serine protease NS3 activity is the Ser-1165. Zn(2+)-binding residues include Cys-1171 and His-1175. One can recognise a Helicase ATP-binding domain in the interval 1217–1369 (PAVPQTFQVA…PNIEEIGLSN (153 aa)). Residue 1230–1237 (APTGSGKS) coordinates ATP. 2 residues coordinate Mg(2+): Ser-1237 and Glu-1317. Positions 1316 to 1319 (DECH) match the DECH box motif. The tract at residues 1486-1497 (QRRGRTGRGRSG) is RNA-binding. The chain crosses the membrane as a helical span at residues 1658-1678 (STWVLVGGVLAALAAYCLTTG). Residues 1679-1690 (SVVIVGRIILSG) form an NS3-binding region. The Cytoplasmic segment spans residues 1679–1805 (SVVIVGRIIL…SITSPLTTQN (127 aa)). A helical transmembrane segment spans residues 1806-1824 (TLLFNILGGWVAAQLAPPS). Residues 1825-1828 (AASA) lie on the Lumenal side of the membrane. The chain crosses the membrane as a helical span at residues 1829–1849 (FVGAGIAGAAVGSIGLGKVLV). Residue Asp-1850 is a topological domain, cytoplasmic. A helical transmembrane segment spans residues 1851–1871 (ILAGYGAGVAGALVAFKVMSG). The Lumenal portion of the chain corresponds to 1872 to 1881 (EVPSTEDLVN). A helical membrane pass occupies residues 1882 to 1902 (LLPAILSPGALVVGVVCAAIL). Topologically, residues 1903–1972 (RRHVGPGEGA…WINEDCSTPC (70 aa)) are cytoplasmic. 2 S-palmitoyl cysteine; by host lipidation sites follow: Cys-1968 and Cys-1972. The stretch at 1973–2002 (SGSWLRDVWDWICTVLTDFKTWLQSKLLPR) is an intramembrane region. The Cytoplasmic portion of the chain corresponds to 2003-2989 (LPGVPFLSCQ…YHSLSRARPR (987 aa)). The Zn(2+) site is built by Cys-2011, Cys-2029, Cys-2031, and Cys-2052. The tract at residues 2120–2208 (EFFTEVDGVR…ASSSASQLSA (89 aa)) is FKBP8-binding. The transcriptional activation stretch occupies residues 2120–2332 (EFFTEVDGVR…PIPPPRRKRT (213 aa)). Positions 2135–2139 (PACKP) are interaction with non-structural protein 4A. Positions 2187–2219 (KRRLARGSPPSLASSSASQLSAPSLKATCTTHH) are disordered. The tract at residues 2189-2441 (RLARGSPPSL…PCAAEESKLP (253 aa)) is interaction with host SKP2. Ser-2194 bears the Phosphoserine; by host; in p56 mark. The segment covering 2194-2211 (SPPSLASSSASQLSAPSL) has biased composition (low complexity). Phosphoserine; by host; in p58 occurs at positions 2197, 2201, 2204, 2207, and 2210. Residues 2210–2249 (SLKATCTTHHDSPDADLIEANLLWRQEMGGNITRVESENK) are ISDR. The tract at residues 2210 to 2275 (SLKATCTTHH…REISVAAEIL (66 aa)) is interaction with EIF2AK2/PKR. The NS4B-binding stretch occupies residues 2249-2306 (KVVILDSFEPLHAEGDEREISVAAEILRKSRKFPSALPIWARPDYNPPLLESWKDPDY). Residues 2322–2325 (PPIP) carry the SH3-binding motif. The Nuclear localization signal motif lies at 2326–2334 (PPRRKRTVV). Lys-2350 is covalently cross-linked (Glycyl lysine isopeptide (Lys-Gly) (interchain with G-Cter in ubiquitin)). Polar residues predominate over residues 2351–2365 (TFGSSGSSAVDSGTA). Residues 2351 to 2407 (TFGSSGSSAVDSGTATALPDLASDDGDKGSDVESYSSMPPLEGEPGDPDLSDGSWST) form a disordered region. Residues 2354–2377 (SSGSSAVDSGTATALPDLASDDGD) are V3. Phosphoserine; by host occurs at positions 2448 and 2461. Residues 2633 to 2751 (PMGFSYDTRC…ICESAGTQED (119 aa)) form the RdRp catalytic domain. Mg(2+)-binding residues include Asp-2639, Asp-2737, and Asp-2738. The helical transmembrane segment at 2990–3010 (WFPLCLLLLSVGVGIYLLPNR) threads the bilayer.

Belongs to the hepacivirus polyprotein family. Homooligomer. Interacts with E1 (via C-terminus). Interacts with the non-structural protein 5A. Interacts (via N-terminus) with host STAT1 (via SH2 domain); this interaction results in decreased STAT1 phosphorylation and ubiquitin-mediated proteasome-dependent STAT1 degradation, leading to decreased IFN-stimulated gene transcription. Interacts with host STAT3; this interaction constitutively activates STAT3. Interacts with host LTBR receptor. Interacts with host TNFRSF1A receptor and possibly induces apoptosis. Interacts with host HNRPK. Interacts with host YWHAE. Interacts with host UBE3A/E6AP. Interacts with host DDX3X. Interacts with host APOA2. Interacts with host RXRA protein. Interacts with host SP110 isoform 3/Sp110b; this interaction sequesters the transcriptional corepressor SP110 away from the nucleus. Interacts with host CREB3 nuclear transcription protein; this interaction triggers cell transformation. Interacts with host ACY3. Interacts with host C1QR1. Interacts with host RBM24; this interaction, which enhances the interaction of the mature core protein with 5'-UTR, may inhibit viral translation and favor replication. Interacts with host EIF2AK2/PKR; this interaction induces the autophosphorylation of EIF2AK2. Part of the viral assembly initiation complex composed of NS2, E1, E2, NS3, NS4A, NS5A and the mature core protein. As to quaternary structure, forms a heterodimer with envelope glycoprotein E2. Interacts with mature core protein. Interacts with protease NS2. The heterodimer E1/E2 interacts with host CLDN1; this interaction plays a role in viral entry into host cell. Interacts with host SPSB2 (via C-terminus). Part of the viral assembly initiation complex composed of NS2, E1, E2, NS3, NS4A, NS5A and the mature core protein. Interacts with host NEURL3; this interaction prevents E1 binding to glycoprotein E2. In terms of assembly, forms a heterodimer with envelope glycoprotein E1. Interacts with host CD81 and SCARB1 receptors; these interactions play a role in viral entry into host cell. Interacts with host EIF2AK2/PKR; this interaction inhibits EIF2AK2 and probably allows the virus to evade the innate immune response. Interacts with host CD209/DC-SIGN and CLEC4M/DC-SIGNR. Interact with host SPCS1; this interaction is essential for viral particle assembly. Interacts with protease NS2. The heterodimer E1/E2 interacts with host CLDN1; this interaction plays a role in viral entry into host cell. Part of the viral assembly initiation complex composed of NS2, E1, E2, NS3, NS4A, NS5A and the mature core protein. Interacts with host SLC3A2/4F2hc; the interaction may facilitate viral entry into host cell. Interacts with human PLSCR1. Homohexamer. Homoheptamer. Interacts with protease NS2. As to quaternary structure, homodimer. Interacts with host SPCS1; this interaction is essential for viral particle assembly. Interacts with envelope glycoprotein E1. Interacts with envelope glycoprotein E2. Interacts with viroporin p7. Interacts with serine protease/helicase NS3. Part of the replication complex composed of NS2, NS3, NS4A, NS4B, NS5A and the RNA-directed RNA polymerase embedded in an ER-derived membranous web. Part of the viral assembly initiation complex composed of NS2, E1, E2, NS3, NS4A, NS5A and the mature core protein. In terms of assembly, interacts with protease NS2. Interacts with non-structural protein 4A; this interaction stabilizes the folding of NS3 serine protease. NS3-NS4A interaction is essential for NS3 activation and allows membrane anchorage of the latter. NS3/NS4A complex also prevents phosphorylation of host IRF3, thus preventing the establishment of dsRNA induced antiviral state. Interacts with host MAVS; this interaction leads to the cleavage and inhibition of host MAVS. Interacts with host TICAM1; this interaction leads to the cleavage and inhibition of host TICAM1. Interacts with host TANK-binding kinase/TBK1; this interaction results in the inhibition of the association between TBK1 and IRF3, which leads to the inhibition of IRF3 activation. Interacts with host RBM24. Part of the replication complex composed of NS2, NS3, NS4A, NS4B, NS5A and the RNA-directed RNA polymerase embedded in an ER-derived membranous web. Part of the viral assembly initiation complex composed of NS2, E1, E2, NS3, NS4A, NS5A and the mature core protein. Interacts with NS3 serine protease; this interaction stabilizes the folding of NS3 serine protease. NS3-NS4A interaction is essential for NS3 activation and allows membrane anchorage of the latter. Interacts with non-structural protein 5A (via N-terminus). Part of the replication complex composed of NS2, NS3, NS4A, NS4B, NS5A and the RNA-directed RNA polymerase embedded in an ER-derived membranous web. Part of the viral assembly initiation complex composed of NS2, E1, E2, NS3, NS4A, NS5A and the mature core protein. As to quaternary structure, homomultimer. Interacts with non-structural protein NS5A. Interacts with host PLA2G4C; this interaction likely initiates the recruitment of replication complexes to lipid droplets. Interacts with host STING; this interaction disrupts the interaction between STING and TBK1 thereby suppressing the interferon signaling. Part of the replication complex composed of NS2, NS3, NS4A, NS4B, NS5A and the RNA-directed RNA polymerase embedded in an ER-derived membranous web. In terms of assembly, monomer. Homodimer; dimerization is required for RNA-binding. Interacts with the mature core protein. Interacts (via N-terminus) with non-structural protein 4A. Interacts with non-structural protein 4B. Interacts (via region D2) with RNA-directed RNA polymerase. Part of the viral assembly initiation complex composed of NS2, E1, E2, NS3, NS4A, NS5A and the mature core protein. Part of the replication complex composed of NS2, NS3, NS4A, NS4B, NS5A and the RNA-directed RNA polymerase embedded in an ER-derived membranous web. Interacts with host GRB2. Interacts with host BIN1. Interacts with host PIK3R1. Interacts with host SRCAP. Interacts with host FKBP8. Interacts (via C-terminus) with host VAPB (via MSP domain). Interacts with host EIF2AK2/PKR; this interaction leads to disruption of EIF2AK2 dimerization by NS5A and probably allows the virus to evade the innate immune response. Interacts (via N-terminus) with host PACSIN2 (via N-terminus); this interaction attenuates protein kinase C alpha-mediated phosphorylation of PACSIN2 by disrupting the interaction between PACSIN2 and PRKCA. Interacts (via N-terminus) with host SRC kinase (via SH2 domain). Interacts with most Src-family kinases. Interacts with host IFI27 and SKP2; promotes the ubiquitin-mediated proteasomal degradation of NS5A. Interacts with host GPS2. Interacts with host TNFRSF21; this interaction allows the modulation by the virus of JNK, p38 MAPK, STAT3, and Akt signaling pathways in a DR6-dependent manner. Interacts (via N-terminus) with host CIDEB (via N-terminus); this interaction seems to regulate the association of HCV particles with APOE. Interacts with host CHKA/Choline Kinase-alpha; CHKA bridges host PI4KA and NS5A and potentiates NS5A-stimulated PI4KA activity, which then facilitates the targeting of the ternary complex to the ER for viral replication. Interacts with host SPSB2 (via C-terminus); this interaction targets NS5A for ubiquitination and degradation. Interacts with host RAB18; this interaction may promote the association of NS5A and other replicase components with lipid droplets. Interacts (via region D2) with host PPIA/CYPA; the interaction stimulates RNA-binding ability of NS5A and is dependent on the peptidyl-prolyl cis-trans isomerase activity of PPIA/CYPA. Interacts with host TRIM14; this interaction induces the degradation of NS5A. Homooligomer. Interacts with non-structural protein 5A. Interacts with host VAPB. Interacts with host PRK2/PKN2. Interacts with host HNRNPA1 and SEPT6; these interactions facilitate viral replication. Part of the replication complex composed of NS2, NS3, NS4A, NS4B, NS5A and the RNA-directed RNA polymerase. Zn(2+) is required as a cofactor. Requires Mg(2+) as cofactor. Post-translationally, specific enzymatic cleavages in vivo yield mature proteins. The structural proteins, core, E1, E2 and p7 are produced by proteolytic processing by host signal peptidases. The core protein precursor is synthesized as a 23 kDa, which is retained in the ER membrane through the hydrophobic signal peptide. Cleavage by the signal peptidase releases the 21 kDa mature core protein. The cleavage of the core protein precursor occurs between aminoacids 176 and 188 but the exact cleavage site is not known. Some degraded forms of the core protein appear as well during the course of infection. The other proteins (p7, NS2, NS3, NS4A, NS4B, NS5A and NS5B) are cleaved by the viral proteases. Autoprocessing between NS2 and NS3 is mediated by the NS2 cysteine protease catalytic domain and regulated by the NS3 N-terminal domain. Phosphorylated by host PKC and PKA. In terms of processing, ubiquitinated; mediated by UBE3A and leading to core protein subsequent proteasomal degradation. Post-translationally, highly N-glycosylated. Palmitoylation is required for NS2/3 autoprocessing and E2 recruitment to membranes. In terms of processing, palmitoylated. This modification may play a role in its polymerization or in protein-protein interactions. Post-translationally, phosphorylated on serines in a basal form termed p56. p58 is a hyperphosphorylated form of p56. p56 and p58 coexist in the cell in roughly equivalent amounts. Hyperphosphorylation is dependent on the presence of NS4A. Host CSNK1A1/CKI-alpha or RPS6KB1 kinases may be responsible for NS5A phosphorylation. Tyrosine phosphorylation is essential for the interaction with host SRC. In terms of processing, the N-terminus is phosphorylated by host PRK2/PKN2.

It localises to the host endoplasmic reticulum membrane. The protein resides in the host mitochondrion membrane. It is found in the virion. Its subcellular location is the host cytoplasm. The protein localises to the host nucleus. It localises to the host lipid droplet. The protein resides in the virion membrane. It is found in the host mitochondrion. Its subcellular location is the host cell membrane. The protein localises to the host perinuclear region. The enzyme catalyses Hydrolysis of four peptide bonds in the viral precursor polyprotein, commonly with Asp or Glu in the P6 position, Cys or Thr in P1 and Ser or Ala in P1'.. It catalyses the reaction a ribonucleoside 5'-triphosphate + H2O = a ribonucleoside 5'-diphosphate + phosphate + H(+). The catalysed reaction is ATP + H2O = ADP + phosphate + H(+). It carries out the reaction RNA(n) + a ribonucleoside 5'-triphosphate = RNA(n+1) + diphosphate. Inhibited by the antiviral drug hexamethylene amiloride. Inhibited by amantadine. Inhibition by amantadine appears to be genotype-dependent. Also inhibited by long-alkyl-chain iminosugar derivatives. Its activity is regulated as follows. Activity is up-regulated by PRK2/PKN2-mediated phosphorylation. Packages viral RNA to form a viral nucleocapsid, and promotes virion budding. Participates in the viral particle production as a result of its interaction with the non-structural protein 5A. Binds RNA and may function as a RNA chaperone to induce the RNA structural rearrangements taking place during virus replication. Modulates viral translation initiation by interacting with viral IRES and 40S ribosomal subunit. Affects various cell signaling pathways, host immunity and lipid metabolism. Prevents the establishment of cellular antiviral state by blocking the interferon-alpha/beta (IFN-alpha/beta) and IFN-gamma signaling pathways and by blocking the formation of phosphorylated STAT1 and promoting ubiquitin-mediated proteasome-dependent degradation of STAT1. Activates STAT3 leading to cellular transformation. Regulates the activity of cellular genes, including c-myc and c-fos. May repress the promoter of p53, and sequester CREB3 and SP110 isoform 3/Sp110b in the cytoplasm. Represses cell cycle negative regulating factor CDKN1A, thereby interrupting an important check point of normal cell cycle regulation. Targets transcription factors involved in the regulation of inflammatory responses and in the immune response: suppresses TNF-induced NF-kappa-B activation, and activates AP-1. Binds to dendritic cells (DCs) via C1QR1, resulting in down-regulation of T-lymphocytes proliferation. Alters lipid metabolism by interacting with hepatocellular proteins involved in lipid accumulation and storage. Induces up-regulation of FAS promoter activity, and thereby contributes to the increased triglyceride accumulation in hepatocytes (steatosis). In terms of biological role, forms a heterodimer with envelope glycoprotein E2, which mediates virus attachment to the host cell, virion internalization through clathrin-dependent endocytosis and fusion with host membrane. Fusion with the host cell is most likely mediated by both E1 and E2, through conformational rearrangements of the heterodimer required for fusion rather than a classical class II fusion mechanism. E1/E2 heterodimer binds host apolipoproteins such as APOB and APOE thereby forming a lipo-viro-particle (LVP). APOE associated to the LVP allows the initial virus attachment to cell surface receptors such as the heparan sulfate proteoglycans (HSPGs), syndecan-1 (SDC1), syndecan-1 (SDC2), the low-density lipoprotein receptor (LDLR) and scavenger receptor class B type I (SCARB1). The cholesterol transfer activity of SCARB1 allows E2 exposure and binding of E2 to SCARB1 and the tetraspanin CD81. E1/E2 heterodimer binding on CD81 activates the epithelial growth factor receptor (EGFR) signaling pathway. Diffusion of the complex E1-E2-EGFR-SCARB1-CD81 to the cell lateral membrane allows further interaction with Claudin 1 (CLDN1) and occludin (OCLN) to finally trigger HCV entry. Functionally, forms a heterodimer with envelope glycoprotein E1, which mediates virus attachment to the host cell, virion internalization through clathrin-dependent endocytosis and fusion with host membrane. Fusion with the host cell is most likely mediated by both E1 and E2, through conformational rearrangements of the heterodimer required for fusion rather than a classical class II fusion mechanism. The interaction between envelope glycoprotein E2 and host apolipoprotein E/APOE allows the proper assembly, maturation and infectivity of the viral particles. This interaction is probably promoted via the up-regulation of cellular autophagy by the virus. E1/E2 heterodimer binds host apolipoproteins such as APOB and APOE thereby forming a lipo-viro-particle (LVP). APOE associated to the LVP allows the initial virus attachment to cell surface receptors such as the heparan sulfate proteoglycans (HSPGs), syndecan-1 (SDC1), syndecan-1 (SDC2), the low-density lipoprotein receptor (LDLR) and scavenger receptor class B type I (SCARB1). The cholesterol transfer activity of SCARB1 allows E2 exposure and binding of E2 to SCARB1 and the tetraspanin CD81. E1/E2 heterodimer binding on CD81 activates the epithelial growth factor receptor (EGFR) signaling pathway. Diffusion of the complex E1-E2-EGFR-SCARB1-CD81 to the cell lateral membrane allows further interaction with Claudin 1 (CLDN1) and occludin (OCLN) to finally trigger HCV entry. Inhibits host EIF2AK2/PKR activation, preventing the establishment of an antiviral state. Viral ligand for CD209/DC-SIGN and CLEC4M/DC-SIGNR, which are respectively found on dendritic cells (DCs), and on liver sinusoidal endothelial cells and macrophage-like cells of lymph node sinuses. These interactions allow the capture of circulating HCV particles by these cells and subsequent transmission to permissive cells. Capture of circulating HCV particles by these SIGN+ cells may facilitate virus infection of proximal hepatocytes and lymphocyte subpopulations and may be essential for the establishment of persistent infection. Its function is as follows. Ion channel protein that acts as a viroporin and plays an essential role in the assembly, envelopment and secretion of viral particles. Regulates the host cell secretory pathway, which induces the intracellular retention of viral glycoproteins and favors assembly of viral particles. Creates a pore in acidic organelles and releases Ca(2+) and H(+) in the cytoplasm of infected cells, leading to a productive viral infection. High levels of cytoplasmic Ca(2+) may trigger membrane trafficking and transport of viral ER-associated proteins to viroplasms, sites of viral genome replication. This ionic imbalance induces the assembly of the inflammasome complex, which triggers the maturation of pro-IL-1beta into IL-1beta through the action of caspase-1. Targets also host mitochondria and induces mitochondrial depolarization. In addition of its role as a viroporin, acts as a lipid raft adhesion factor. Cysteine protease required for the proteolytic auto-cleavage between the non-structural proteins NS2 and NS3. The N-terminus of NS3 is required for the function of NS2 protease (active region NS2-3). Promotes the initiation of viral particle assembly by mediating the interaction between structural and non-structural proteins. In terms of biological role, displays three enzymatic activities: serine protease with a chymotrypsin-like fold, NTPase and RNA helicase. NS3 serine protease, in association with NS4A, is responsible for the cleavages of NS3-NS4A, NS4A-NS4B, NS4B-NS5A and NS5A-NS5B. The NS3/NS4A complex prevents phosphorylation of host IRF3, thus preventing the establishment of dsRNA induced antiviral state. The NS3/NS4A complex induces host amino acid transporter component SLC3A2, thus contributing to HCV propagation. NS3 RNA helicase binds to RNA and unwinds both dsDNA and dsRNA in the 3' to 5' direction, and likely resolves RNA complicated stable secondary structures in the template strand. Binds a single ATP and catalyzes the unzipping of a single base pair of dsRNA. Inhibits host antiviral proteins TBK1 and IRF3 thereby preventing the establishment of an antiviral state. Cleaves host MAVS/CARDIF thereby preventing the establishment of an antiviral state. Cleaves host TICAM1/TRIF, thereby disrupting TLR3 signaling and preventing the establishment of an antiviral state. Functionally, induces a specific membrane alteration that serves as a scaffold for the virus replication complex. This membrane alteration gives rise to the so-called ER-derived membranous web that contains the replication complex. NS4B self-interaction contributes to its function in membranous web formation. Promotes host TRIF protein degradation in a CASP8-dependent manner thereby inhibiting host TLR3-mediated interferon signaling. Disrupts the interaction between STING and TBK1 contributing to the inhibition of interferon signaling. Its function is as follows. Phosphorylated protein that is indispensable for viral replication and assembly. Both hypo- and hyperphosphorylated states are required for the viral life cycle. The hyperphosphorylated form of NS5A is an inhibitor of viral replication. Involved in RNA-binding and especially in binding to the viral genome. Zinc is essential for RNA-binding. Participates in the viral particle production as a result of its interaction with the mature viral core protein. Its interaction with host VAPB may target the viral replication complex to vesicles. Down-regulates viral IRES translation initiation. Mediates interferon resistance, presumably by interacting with and inhibiting host EIF2AK2/PKR. Prevents BIN1-induced apoptosis. Acts as a transcriptional activator of some host genes important for viral replication when localized in the nucleus. Via the interaction with host PACSIN2, modulates lipid droplet formation in order to promote virion assembly. Modulates TNFRSF21/DR6 signaling pathway for viral propagation. RNA-dependent RNA polymerase that performs primer-template recognition and RNA synthesis during viral replication. Initiates RNA transcription/replication at a flavin adenine dinucleotide (FAD), resulting in a 5'- FAD cap on viral RNAs. In this way, recognition of viral 5' RNA by host pattern recognition receptors can be bypassed, thereby evading activation of antiviral pathways. This Hepatitis C virus genotype 1b (strain HC-J4) (HCV) protein is Genome polyprotein.